The sequence spans 265 residues: MKKEVCSAAFLKAVFAEFLATLIFVFFGLGSALKWPSAMPSVLQISLAFGLAIGTMAQALGPVSGGHMNPAITLALLVGNQISLLRAVFYLVAQLVGAIAGAAILYGLAPYNARSNLAVNALNNNTTAGQAVVAEMILTFQLALCVFSSTDSRRTSPVGSPALSIGLSVTLGHLVGIYFTGCSMNPARSFGPAVIMSRFSSAHWVFWVGPIVGAATAAIIYFYLLFPHSLSLSDRVAILKGTYEPDEDWEESQEERKKTMELTAH.

Residues 1–12 (MKKEVCSAAFLK) lie on the Cytoplasmic side of the membrane. The chain crosses the membrane as a helical span at residues 13–33 (AVFAEFLATLIFVFFGLGSAL). Topologically, residues 34-39 (KWPSAM) are extracellular. The helical transmembrane segment at 40–60 (PSVLQISLAFGLAIGTMAQAL) threads the bilayer. The Cytoplasmic segment spans residues 61–65 (GPVSG). Residues 66–74 (GHMNPAITL) constitute an intramembrane region (discontinuously helical). The short motif at 69 to 71 (NPA) is the NPA 1 element. Over 75–87 (ALLVGNQISLLRA) the chain is Cytoplasmic. A helical transmembrane segment spans residues 88-108 (VFYLVAQLVGAIAGAAILYGL). Residues 109 to 126 (APYNARSNLAVNALNNNT) are Extracellular-facing. 2 N-linked (GlcNAc...) asparagine glycosylation sites follow: Asn124 and Asn125. A helical transmembrane segment spans residues 127–147 (TAGQAVVAEMILTFQLALCVF). The Cytoplasmic segment spans residues 148–158 (SSTDSRRTSPV). The chain crosses the membrane as a helical span at residues 159-179 (GSPALSIGLSVTLGHLVGIYF). Thr180 is a topological domain (extracellular). The discontinuously helical intramembrane region spans 181–191 (GCSMNPARSFG). Positions 185–187 (NPA) match the NPA 2 motif. The Extracellular portion of the chain corresponds to 192-203 (PAVIMSRFSSAH). Residues 204–224 (WVFWVGPIVGAATAAIIYFYL) traverse the membrane as a helical segment. The Cytoplasmic portion of the chain corresponds to 225-265 (LFPHSLSLSDRVAILKGTYEPDEDWEESQEERKKTMELTAH).

The protein belongs to the MIP/aquaporin (TC 1.A.8) family. In terms of assembly, homotetramer; each monomer provides an independent water pore. Interacts with TRPV4; the interaction is probably indirect and regulates TRPV4 activation by hypotonicity.

It localises to the apical cell membrane. The protein resides in the cell membrane. Its subcellular location is the cytoplasmic vesicle membrane. It catalyses the reaction H2O(in) = H2O(out). Aquaporins form homotetrameric transmembrane channels, with each monomer independently mediating water transport across the plasma membrane along its osmotic gradient. Plays an important role in fluid secretion in salivary glands. Required for TRPV4 activation by hypotonicity. Together with TRPV4, controls regulatory volume decrease in salivary epithelial cells. Seems to play a redundant role in water transport in the eye, lung and in sweat glands. In Ovis aries (Sheep), this protein is Aquaporin-5.